The following is a 222-amino-acid chain: Formimidoylglutamase (222 aa).

Mn(2+) contacts are provided by His34, Asp59, His61, Asp63, Asp150, and Asp152.

Belongs to the arginase family. The cofactor is Mn(2+).

The enzyme catalyses N-formimidoyl-L-glutamate + H2O = formamide + L-glutamate. It functions in the pathway amino-acid degradation; L-histidine degradation into L-glutamate; L-glutamate from N-formimidoyl-L-glutamate (hydrolase route): step 1/1. Catalyzes the conversion of N-formimidoyl-L-glutamate to L-glutamate and formamide. This is Formimidoylglutamase (hutG) from Klebsiella aerogenes (Enterobacter aerogenes).